A 406-amino-acid chain; its full sequence is Peptidase T (406 aa).

Histidine 82 serves as a coordination point for Zn(2+). Aspartate 84 is an active-site residue. Position 142 (aspartate 142) interacts with Zn(2+). The active-site Proton acceptor is glutamate 176. Positions 177, 199, and 381 each coordinate Zn(2+).

It belongs to the peptidase M20B family. Requires Zn(2+) as cofactor.

It localises to the cytoplasm. It carries out the reaction Release of the N-terminal residue from a tripeptide.. Its function is as follows. Cleaves the N-terminal amino acid of tripeptides. The chain is Peptidase T from Streptococcus agalactiae serotype V (strain ATCC BAA-611 / 2603 V/R).